Consider the following 252-residue polypeptide: 5-oxoprolinase subunit A (252 aa).

Belongs to the LamB/PxpA family. In terms of assembly, forms a complex composed of PxpA, PxpB and PxpC.

It catalyses the reaction 5-oxo-L-proline + ATP + 2 H2O = L-glutamate + ADP + phosphate + H(+). Catalyzes the cleavage of 5-oxoproline to form L-glutamate coupled to the hydrolysis of ATP to ADP and inorganic phosphate. This is 5-oxoprolinase subunit A from Bordetella pertussis (strain Tohama I / ATCC BAA-589 / NCTC 13251).